We begin with the raw amino-acid sequence, 252 residues long: Phosphomannomutase (252 aa).

Catalysis depends on Asp-13, which acts as the Nucleophile. Residues Asp-13 and Asp-15 each coordinate Mg(2+). Residue Asp-15 is the Proton donor/acceptor of the active site. Residues Arg-22, Arg-124, Arg-135, Arg-142, Ser-180, and Asp-182 each coordinate alpha-D-mannose 1-phosphate. Positions 208, 220, and 225 each coordinate Mg(2+).

It belongs to the eukaryotic PMM family. As to quaternary structure, homodimer. The cofactor is Mg(2+). In terms of tissue distribution, expressed in roots, leaves, stems and flowers.

It localises to the cytoplasm. It catalyses the reaction alpha-D-mannose 1-phosphate = D-mannose 6-phosphate. Its pathway is nucleotide-sugar biosynthesis; GDP-alpha-D-mannose biosynthesis; alpha-D-mannose 1-phosphate from D-fructose 6-phosphate: step 2/2. Its function is as follows. Catalyzes the interconversion of mannose-6-phosphate to mannose-1-phosphate, the precursor for the synthesis of GDP-mannose. GDP-mannose is an essential sugar nucleotide for the synthesis of D-mannose-containing cell wall polysaccharides (galactomannans and glucomannans), glycolipids, glycoproteins and the antioxidant L-ascorbate. Involved in the biosynthesis of ascorbate and polysaccharides in response to abiotic stress during seed germination. The chain is Phosphomannomutase from Dendrobium officinale (Orchid).